The sequence spans 3291 residues: Protocadherin-16 (3291 aa).

Residues 1–35 form the signal peptide; the sequence is MQKELSVALSCPGMKSLRTLLPLLVLLGATVPGSW. Residues 36-2933 are Extracellular-facing; sequence GQAGSLDLQI…PDLNLLLVGA (2898 aa). 27 consecutive Cadherin domains span residues 37 to 137, 138 to 249, 250 to 356, 369 to 466, 476 to 572, 573 to 679, 680 to 784, 785 to 888, 889 to 994, 995 to 1105, 1100 to 1205, 1218 to 1317, 1326 to 1429, 1430 to 1539, 1539 to 1642, 1643 to 1744, 1745 to 1848, 1849 to 1953, 1976 to 2061, 2062 to 2164, 2165 to 2270, 2270 to 2369, 2370 to 2475, 2476 to 2595, 2596 to 2699, 2700 to 2806, and 2807 to 2926; these read QAGS…APAF, PQAR…APAF, NQSR…QPSM, VSEA…APAF, LPEV…EPQF, QRTF…PPQF, YPRE…PPIF, EQLQ…SPAF, PAPE…APRF, DSPT…EPTF, SEEP…SPTF, IQVP…SPDL, VPVV…APTF, ARDP…APVF, FASP…APAF, PQQE…TPTF, GNTH…APVF, PVPS…APAF, LATL…GPRF, PRTS…APRF, LRPH…RPTI, IPQP…VPTF, SQSL…APSF, TLPH…PPVF, TRAS…GPAF, PLSL…DPVF, and LAPS…APDL. N-linked (GlcNAc...) asparagine glycosylation occurs at Asn396. Asn2354 carries an N-linked (GlcNAc...) asparagine glycan. A disordered region spans residues 2867–2886; that stretch reads SRAPGSGTTTSGGGGRTRRE. A helical transmembrane segment spans residues 2934-2954; that stretch reads VAASLGVVVVLALAALVLGLV. Residues 2955 to 3291 lie on the Cytoplasmic side of the membrane; the sequence is RARSRKAEAA…EPPDDTELRI (337 aa). Positions 2978–3033 are disordered; it reads SLQKLGREPPSPPPSEHLYHQTLPSYGGPGAGGPYPRGGSLDPSHSSGRGSAEAAE. Positions 3004–3013 are enriched in gly residues; it reads GGPGAGGPYP. Ser3048 is subject to Phosphoserine. Disordered stretches follow at residues 3051–3081 and 3226–3291; these read SSLAARGPDSGIQQDADGLSDTSCEPPAPDT and ASHR…ELRI. The segment covering 3237–3259 has biased composition (low complexity); that stretch reads SLSSAAMSPSFSPSLSPLAARSP. Over residues 3270-3279 the composition is skewed to polar residues; sequence PSASALSTES.

As to quaternary structure, heterophilic interaction with FAT4; this interaction affects their respective protein levels. In terms of tissue distribution, expressed in the epicardium and atrioventricular sulcus (at protein level).

It localises to the cell membrane. Its function is as follows. Calcium-dependent cell-adhesion protein. Mediates functions in neuroprogenitor cell proliferation and differentiation. In the heart, has a critical role for proper morphogenesis of the mitral valve, acting in the regulation of cell migration involved in valve formation. The sequence is that of Protocadherin-16 (Dchs1) from Mus musculus (Mouse).